Consider the following 191-residue polypeptide: Orotate phosphoribosyltransferase (191 aa).

114–122 (EDVITTGGS) is a binding site for 5-phospho-alpha-D-ribose 1-diphosphate. Thr118 and Arg146 together coordinate orotate.

It belongs to the purine/pyrimidine phosphoribosyltransferase family. PyrE subfamily. As to quaternary structure, homodimer. It depends on Mg(2+) as a cofactor.

It catalyses the reaction orotidine 5'-phosphate + diphosphate = orotate + 5-phospho-alpha-D-ribose 1-diphosphate. Its pathway is pyrimidine metabolism; UMP biosynthesis via de novo pathway; UMP from orotate: step 1/2. In terms of biological role, catalyzes the transfer of a ribosyl phosphate group from 5-phosphoribose 1-diphosphate to orotate, leading to the formation of orotidine monophosphate (OMP). This Desulforamulus reducens (strain ATCC BAA-1160 / DSM 100696 / MI-1) (Desulfotomaculum reducens) protein is Orotate phosphoribosyltransferase.